Consider the following 299-residue polypeptide: GTPase Era (299 aa).

In terms of domain architecture, Era-type G spans 5-175 (RSGFVCLVGR…IDVLAAALPP (171 aa)). A G1 region spans residues 13 to 20 (GRPNTGKS). Position 13–20 (13–20 (GRPNTGKS)) interacts with GTP. The tract at residues 39 to 43 (QTTRH) is G2. Residues 60-63 (DTPG) form a G3 region. Residues 60–64 (DTPGL) and 124–127 (TKID) each bind GTP. The interval 124–127 (TKID) is G4. Positions 154–156 (VSA) are G5. A KH type-2 domain is found at 206 to 285 (VRDELPHSLA…YLDLRVKVAK (80 aa)).

This sequence belongs to the TRAFAC class TrmE-Era-EngA-EngB-Septin-like GTPase superfamily. Era GTPase family. Monomer.

The protein localises to the cell envelope. It is found in the secreted. It localises to the cell wall. In terms of biological role, exhibits GTPase activity. Binds RNA but is probably not involved in ribosome assembly in mycobacteria. The polypeptide is GTPase Era (Mycolicibacterium paratuberculosis (strain ATCC BAA-968 / K-10) (Mycobacterium paratuberculosis)).